The following is a 287-amino-acid chain: Undecaprenyl-diphosphatase (287 aa).

7 consecutive transmembrane segments (helical) span residues L6–V26, S45–F65, N89–K109, V111–W131, A204–L224, A238–L258, and Y266–A286.

This sequence belongs to the UppP family.

It localises to the cell inner membrane. The catalysed reaction is di-trans,octa-cis-undecaprenyl diphosphate + H2O = di-trans,octa-cis-undecaprenyl phosphate + phosphate + H(+). In terms of biological role, catalyzes the dephosphorylation of undecaprenyl diphosphate (UPP). Confers resistance to bacitracin. This Bordetella pertussis (strain Tohama I / ATCC BAA-589 / NCTC 13251) protein is Undecaprenyl-diphosphatase.